Consider the following 284-residue polypeptide: MKRIRQTMRAVVHGSGLRRLTPPQRVTSGTVVLGARHLSKSYGARTVLDDVSLDVRTGEVLALVGPNGAGKSTLLSILTGDTPPDRGEVTVLDRPLAAWSPAELALRRAVLPQSFTVSFPFDVVDVVHMGRAPWAAVDVDVDDDRVVADAMAATEVTALAARKFPSLSGGEKARVMLARVLAQQTQIMLWDEPTAALDIRHQESVLRIARQRAAQGDAIVVVLHDLALAAAYADQVAILSQGQIAAYGPPAEVFTAKLLSDVYSYEVEIVSHPRTGVPLVLPVR.

The ABC transporter domain maps to 33-266 (LGARHLSKSY…KLLSDVYSYE (234 aa)). 65–72 (GPNGAGKS) lines the ATP pocket.

This sequence belongs to the ABC transporter superfamily. Heme (hemin) importer (TC 3.A.1.14.5) family. The complex is composed of two ATP-binding proteins (HmuV), two transmembrane proteins (HmuU) and a solute-binding protein (HmuT).

It is found in the cell membrane. Functionally, part of the ABC transporter complex HmuTUV involved in hemin import. Responsible for energy coupling to the transport system. The protein is Hemin import ATP-binding protein HmuV of Thermobifida fusca (strain YX).